Reading from the N-terminus, the 42-residue chain is Large ribosomal subunit protein bL36 (42 aa).

It belongs to the bacterial ribosomal protein bL36 family.

The chain is Large ribosomal subunit protein bL36 from Ehrlichia chaffeensis (strain ATCC CRL-10679 / Arkansas).